Here is a 379-residue protein sequence, read N- to C-terminus: Succinyl-diaminopimelate desuccinylase (379 aa).

His-70 contacts Zn(2+). Residue Asp-72 is part of the active site. Asp-103 contributes to the Zn(2+) binding site. Glu-137 functions as the Proton acceptor in the catalytic mechanism. 3 residues coordinate Zn(2+): Glu-138, Glu-166, and His-352.

Belongs to the peptidase M20A family. DapE subfamily. In terms of assembly, homodimer. Zn(2+) serves as cofactor. Co(2+) is required as a cofactor.

It catalyses the reaction N-succinyl-(2S,6S)-2,6-diaminopimelate + H2O = (2S,6S)-2,6-diaminopimelate + succinate. Its pathway is amino-acid biosynthesis; L-lysine biosynthesis via DAP pathway; LL-2,6-diaminopimelate from (S)-tetrahydrodipicolinate (succinylase route): step 3/3. In terms of biological role, catalyzes the hydrolysis of N-succinyl-L,L-diaminopimelic acid (SDAP), forming succinate and LL-2,6-diaminopimelate (DAP), an intermediate involved in the bacterial biosynthesis of lysine and meso-diaminopimelic acid, an essential component of bacterial cell walls. This chain is Succinyl-diaminopimelate desuccinylase, found in Shewanella baltica (strain OS155 / ATCC BAA-1091).